The following is a 34-amino-acid chain: Tryptophanase operon leader peptide (34 aa).

The polypeptide is Tryptophanase operon leader peptide (tnaL) (Proteus vulgaris).